We begin with the raw amino-acid sequence, 347 residues long: Endophilin-A3 (347 aa).

Positions 1–21 (MSVAGLKKQFHKASQLFSEKI) are membrane-binding amphipathic helix. In terms of domain architecture, BAR spans 18–249 (SEKISGAEGT…LQMRISAASS (232 aa)). Residues 60–87 (PNPAYRAKLGMLNTVSKIRGQVKTTGYP) form a required for dimerization upon membrane association region. Positions 181–201 (EEVRQAVEKFEESKELAERSM) form a coiled coil. An interaction with ARC region spans residues 218–254 (FIEAALDYHRQSTEILQELQSKLQMRISAASSVPRRE). A disordered region spans residues 248–271 (SSVPRREYKPRPVKRSSSELNGVS). Position 265 is a phosphoserine (Ser265). An SH3 domain is found at 285-344 (MDQPCCRGLYDFEPENQGELGFKEGDIITLTNQIDENWYEGMIHGESGFFPINYVEVIVP).

This sequence belongs to the endophilin family. In terms of assembly, interacts with ARC. Interacts with DNM1, SGIP1 and SYNJ1. Interacts with the huntingtin exon 1 protein (HDEX1P) containing a glutamine repeat in the pathological range and promotes formation of insoluble polyglutamine-containing aggregates in vivo. Interacts with DYDC1. Interacts with FASLG. Interacts with ATXN2. Interacts with BIN2. In terms of tissue distribution, brain and testis.

The protein resides in the cytoplasm. It is found in the early endosome membrane. Implicated in endocytosis. May recruit other proteins to membranes with high curvature. This Homo sapiens (Human) protein is Endophilin-A3 (SH3GL3).